Consider the following 1188-residue polypeptide: Phospholipid-transporting ATPase IB (1188 aa).

Residues 1 to 94 (MLNGAGLDKA…PRFLYEQIRR (94 aa)) are Cytoplasmic-facing. Position 45 is a phosphothreonine (Thr-45). The helical transmembrane segment at 95–115 (AANAFFLFIALLQQIPDVSPT) threads the bilayer. Residues 116–119 (GRYT) lie on the Extracellular side of the membrane. A helical transmembrane segment spans residues 120–140 (TLVPLIIILTIAGIKEIVEDF). Residues 141–316 (KRHKADNAVN…SNVEKVTNVQ (176 aa)) lie on the Cytoplasmic side of the membrane. Residues 317–337 (ILVLFGILLVMALVSSAGALY) form a helical membrane-spanning segment. The Extracellular segment spans residues 338–364 (WNRSHGEKNWYIKKMDTTSDNFGYNLL). Residues 365–385 (TFIILYNNLIPISLLVTLEVV) form a helical membrane-spanning segment. Residues 386–887 (KYTQALFINW…CILYCFYKNV (502 aa)) are Cytoplasmic-facing. Asp-428 serves as the catalytic 4-aspartylphosphate intermediate. Positions 428, 429, 430, 528, 569, 592, 625, 705, 706, 707, 795, and 801 each coordinate ATP. Asp-428 is a binding site for Mg(2+). Thr-430 is a binding site for Mg(2+). Residue Asp-821 coordinates Mg(2+). Residues Asn-824 and Asp-825 each coordinate ATP. Asp-825 contributes to the Mg(2+) binding site. A helical transmembrane segment spans residues 888 to 908 (VLYIIELWFAFVNGFSGQILF). Topologically, residues 909–910 (ER) are extracellular. A helical membrane pass occupies residues 911 to 931 (WCIGLYNVIFTALPPFTLGIF). At 932-959 (ERSCTQESMLRFPQLYKITQNGEGFNTK) the chain is on the cytoplasmic side. A helical transmembrane segment spans residues 960-980 (VFWGHCINALVHSLILFWFPM). Residues 981–997 (KALEHDTVLTSGHATDY) lie on the Extracellular side of the membrane. The helical transmembrane segment at 998–1018 (LFVGNIVYTYVVVTVCLKAGL) threads the bilayer. At 1019 to 1028 (ETTAWTKFSH) the chain is on the cytoplasmic side. Residues 1029–1049 (LAVWGSMLTWLVFFGIYSTIW) form a helical membrane-spanning segment. At 1050-1063 (PTIPIAPDMRGQAT) the chain is on the extracellular side. The helical transmembrane segment at 1064–1084 (MVLSSAHFWLGLFLVPTACLI) threads the bilayer. At 1085 to 1188 (EDVAWRAAKH…DTTKKKSRKK (104 aa)) the chain is on the cytoplasmic side. The segment at 1162–1188 (SQEEHGAVSQEEVIRAYDTTKKKSRKK) is disordered. A compositionally biased stretch (basic and acidic residues) spans 1163–1182 (QEEHGAVSQEEVIRAYDTTK).

Belongs to the cation transport ATPase (P-type) (TC 3.A.3) family. Type IV subfamily. In terms of assembly, component of a P4-ATPase flippase complex which consists of a catalytic alpha subunit and an accessory beta subunit. Interacts with TMEM30A to form a flippase complex. Mg(2+) serves as cofactor. In terms of tissue distribution, strongly expressed in the brain, cerebellum, retina and testis.

The protein resides in the membrane. Its subcellular location is the golgi apparatus membrane. The protein localises to the endosome membrane. It localises to the cell membrane. It is found in the photoreceptor outer segment membrane. The protein resides in the photoreceptor inner segment membrane. It carries out the reaction ATP + H2O + phospholipidSide 1 = ADP + phosphate + phospholipidSide 2.. The enzyme catalyses a 1,2-diacyl-sn-glycero-3-phospho-L-serine(out) + ATP + H2O = a 1,2-diacyl-sn-glycero-3-phospho-L-serine(in) + ADP + phosphate + H(+). It catalyses the reaction a 1,2-diacyl-sn-glycero-3-phosphoethanolamine(in) + ATP + H2O = a 1,2-diacyl-sn-glycero-3-phosphoethanolamine(out) + ADP + phosphate + H(+). Its function is as follows. Catalytic component of a P4-ATPase flippase complex which catalyzes the hydrolysis of ATP coupled to the transport of aminophospholipids from the outer to the inner leaflet of various membranes and ensures the maintenance of asymmetric distribution of phospholipids. Able to translocate phosphatidylserine, but not phosphatidylcholine. Phospholipid translocation also seems to be implicated in vesicle formation and in uptake of lipid signaling molecules. Reconstituted to liposomes, the ATP8A2:TMEM30A flippase complex predominantly transports phosphatidylserine (PS) and to a lesser extent phosphatidylethanolamine (PE). Phospholipid translocation is not associated with a countertransport of an inorganic ion or other charged substrate from the cytoplasmic side toward the exoplasm in connection with the phosphorylation from ATP. ATP8A2:TMEM30A may be involved in regulation of neurite outgrowth. Proposed to function in the generation and maintenance of phospholipid asymmetry in photoreceptor disk membranes and neuronal axon membranes. May be involved in vesicle trafficking in neuronal cells. Required for normal visual and auditory function; involved in photoreceptor and inner ear spiral ganglion cell survival. The sequence is that of Phospholipid-transporting ATPase IB from Homo sapiens (Human).